The primary structure comprises 684 residues: Phenoloxidase 2 (684 aa).

A propeptide spanning residues 1-50 (MADKKNLLLLFDHPTEPVFMDKGKRVTVFDVPDSFLTDRYRPISNEVQSR) is cleaved from the precursor. 3 residues coordinate Cu cation: His208, His212, and His238. The Proton acceptor role is filled by Glu350. His365, His369, and His405 together coordinate Cu cation. N-linked (GlcNAc...) asparagine glycosylation is found at Asn448 and Asn492. Cystine bridges form between Cys581–Cys623 and Cys583–Cys630. Asn665 and Asn677 each carry an N-linked (GlcNAc...) asparagine glycan.

This sequence belongs to the tyrosinase family. The cofactor is Cu(2+). Upon activation, a trypsin type protease cleaves prophenol oxidase to yield the active enzyme.

The protein localises to the secreted. The enzyme catalyses 2 L-dopa + O2 = 2 L-dopaquinone + 2 H2O. It catalyses the reaction L-tyrosine + O2 = L-dopaquinone + H2O. Functionally, this is a copper-containing oxidase that functions in the formation of pigments such as melanins and other polyphenolic compounds. Catalyzes the rate-limiting conversions of tyrosine to DOPA, DOPA to DOPA-quinone and possibly 5,6 dihydroxyindole to indole-5'6 quinonee. The chain is Phenoloxidase 2 (PPO2) from Drosophila melanogaster (Fruit fly).